A 744-amino-acid chain; its full sequence is Palmitoyltransferase ZDHHC5-A (744 aa).

Residues 1–11 (MPSGSMSGGVS) show a composition bias toward gly residues. The segment at 1 to 25 (MPSGSMSGGVSGPTSPPHPTVPSRP) is disordered. Topologically, residues 1–30 (MPSGSMSGGVSGPTSPPHPTVPSRPLRPSR) are cytoplasmic. A helical transmembrane segment spans residues 31-51 (YVPVSAATAFLVGSTTLFFCF). Over 52-61 (TCPWLSEQFS) the chain is Extracellular. The chain crosses the membrane as a helical span at residues 62-82 (VAVPIYNGVMFMFVLANFCMA). Residues 83–167 (TFMDPGIFPR…IGRRNYRYFF (85 aa)) are Cytoplasmic-facing. The DHHC domain occupies 121–171 (KWCSTCRFYRPPRCSHCSVCDNCVEDFDHHCPWVNNCIGRRNYRYFFLFLL). Cys-151 (S-palmitoyl cysteine intermediate) is an active-site residue. The helical transmembrane segment at 168 to 188 (LFLLSLTAHIMGVFGFGLLFI) threads the bilayer. Topologically, residues 189–208 (LYHTQQLDRVHSAVTMAVMC) are extracellular. A helical membrane pass occupies residues 209-229 (VAGLFFIPVAGLTGFHVVLVA). Over 230-744 (RGRTTNEQVT…VGGTTYEISV (515 aa)) the chain is Cytoplasmic. 3 disordered regions span residues 314 to 523 (SLEM…PVVG), 556 to 645 (QHAV…SLSY), and 664 to 744 (SVAG…EISV). Residues 369–393 (TYSSPGKNHTALTHAYANQSSQQPG) are compositionally biased toward polar residues. Basic and acidic residues predominate over residues 398–413 (PSLDGREGGGAERSGA). The segment covering 415-428 (RTGGGPGGPPGSGI) has biased composition (gly residues). A compositionally biased stretch (polar residues) spans 460–501 (THNAPPSEATTSTSYKSLANQTPPQAARNGSLSYDSLLTPSE). Residues 571–584 (PERERERLLHDSQA) show a composition bias toward basic and acidic residues. Residues 585–601 (QHHHHHHHHHHHHRPPR) show a composition bias toward basic residues. Composition is skewed to low complexity over residues 621–630 (RTRSTDTTHP) and 689–723 (PKPSSTPSSPTHPISVSTRPGQAHSSAGSSQSPAH). Over residues 725–737 (PGGGVKKVTGVGG) the composition is skewed to gly residues.

The protein belongs to the DHHC palmitoyltransferase family. ERF2/ZDHHC9 subfamily.

The protein resides in the cell membrane. The catalysed reaction is L-cysteinyl-[protein] + hexadecanoyl-CoA = S-hexadecanoyl-L-cysteinyl-[protein] + CoA. Its function is as follows. Palmitoyltransferase that catalyzes the addition of palmitate onto various protein substrates and is involved in a variety of cellular processes. The sequence is that of Palmitoyltransferase ZDHHC5-A from Danio rerio (Zebrafish).